The following is a 209-amino-acid chain: Eukaryotic translation initiation factor 4E (209 aa).

Residues 51–52 (WH), 97–98 (WE), and 153–158 (RKQAYR) contribute to the mRNA site.

The protein belongs to the eukaryotic initiation factor 4E family. In terms of assembly, eIF4F is a multi-subunit complex, the composition of which varies with external and internal environmental conditions. It is composed of at least eIF4A, eIF4E and eIF4G. eIF4E is also known to interact with other partners.

Functionally, recognizes and binds the 7-methylguanosine-containing mRNA cap during an early step in the initiation of protein synthesis and facilitates ribosome binding by inducing the unwinding of the mRNAs secondary structures. In Candida albicans (strain SC5314 / ATCC MYA-2876) (Yeast), this protein is Eukaryotic translation initiation factor 4E (TIF45).